Here is a 180-residue protein sequence, read N- to C-terminus: Bifunctional protein PyrR (180 aa).

The PRPP-binding motif lies at 101–113; it reads VILVDDVLYTGRT.

Belongs to the purine/pyrimidine phosphoribosyltransferase family. PyrR subfamily. Homodimer and homohexamer; in equilibrium.

It carries out the reaction UMP + diphosphate = 5-phospho-alpha-D-ribose 1-diphosphate + uracil. Regulates transcriptional attenuation of the pyrimidine nucleotide (pyr) operon by binding in a uridine-dependent manner to specific sites on pyr mRNA. This disrupts an antiterminator hairpin in the RNA and favors formation of a downstream transcription terminator, leading to a reduced expression of downstream genes. Functionally, also displays a weak uracil phosphoribosyltransferase activity which is not physiologically significant. The sequence is that of Bifunctional protein PyrR from Bacillus cytotoxicus (strain DSM 22905 / CIP 110041 / 391-98 / NVH 391-98).